Here is a 145-residue protein sequence, read N- to C-terminus: Transcriptional regulator SlyA (145 aa).

Residues 2 to 135 enclose the HTH marR-type domain; sequence ELPLGSDLAR…LALLVSRLEK (134 aa). A DNA-binding region (H-T-H motif) is located at residues 49–72; it reads QIQLAKAIGIEQPSLVRTLDQLEE.

The protein belongs to the SlyA family. In terms of assembly, homodimer.

Transcription regulator that can specifically activate or repress expression of target genes. Regulates genes involved in production of antibiotic and exoenzyme virulence determinants in the phytopathogen. Required for the expression of the virulence protein evf during Drosophila melanogaster infection. The chain is Transcriptional regulator SlyA from Pectobacterium carotovorum subsp. carotovorum (Erwinia carotovora subsp. carotovora).